The sequence spans 428 residues: MPPTGEEPSGHAESKPPASDPMSTPGTGQEQLPLSGIRVIDVGNFLAGPYAASILGEFGAEVLKIEHPLGGDPMRRFGTATARHDATLAWLSEARNRKSVTIDLRQQEGVALFLKLVAKSDILIENFRPGTMEEWGLSWPVLQATNPGLIMLRVSGYGQTGPYRRRSGFAHIAHAFSGLSYLAGFPGETPVLPGTAPLGDYIASLFGAIGILIALRHKEQTGRGQLIDVGIYEAVFRILDEIAPAYGLFGKIREREGAGSFIAVPHGHFRSKDGKWVAIACTTDKMFERLAEAMERPELASPELYGDQRKRLAARDIVNQITIEWVGSLTRDEVMRRCLEKEVPVGPLNSIADMFNDEHFLARGNFACIEAEGIGEVVVPNVIPRLSETPGRVTNLGPPLGNATYEVLRELLDISAEEIKRLRSRKII.

The tract at residues 1–31 is disordered; that stretch reads MPPTGEEPSGHAESKPPASDPMSTPGTGQEQ. Over residues 21 to 31 the composition is skewed to polar residues; it reads PMSTPGTGQEQ. D200 functions as the Nucleophile in the catalytic mechanism.

The protein belongs to the CoA-transferase III family. As to quaternary structure, forms a large complex composed of six heterodimers (alpha, beta).

It carries out the reaction succinyl-CoA + (S)-malate = (S)-malyl-CoA + succinate. The catalysed reaction is (3S)-citramalate + succinyl-CoA = (3S)-citramalyl-CoA + succinate. In terms of biological role, involved in the 3-hydroxypropionate cycle used for autotrophic carbon dioxide fixation. Catalyzes the transfer of CoA moiety from succinyl-CoA to L-malate to yield L-malyl-CoA. It is highly specific for succinyl-CoA as the CoA donor, however it can accept L-citramalate instead of L-malate as the CoA acceptor. The protein is Succinyl-CoA--L-malate CoA-transferase alpha subunit (smtA) of Chloroflexus aurantiacus.